Here is a 360-residue protein sequence, read N- to C-terminus: Ribosomal RNA large subunit methyltransferase M (360 aa).

Residues S187, 220-223 (CPGG), D239, D259, and D276 each bind S-adenosyl-L-methionine. K305 (proton acceptor) is an active-site residue.

It belongs to the class I-like SAM-binding methyltransferase superfamily. RNA methyltransferase RlmE family. RlmM subfamily. In terms of assembly, monomer.

It localises to the cytoplasm. The enzyme catalyses cytidine(2498) in 23S rRNA + S-adenosyl-L-methionine = 2'-O-methylcytidine(2498) in 23S rRNA + S-adenosyl-L-homocysteine + H(+). Its function is as follows. Catalyzes the 2'-O-methylation at nucleotide C2498 in 23S rRNA. The polypeptide is Ribosomal RNA large subunit methyltransferase M (Shewanella sediminis (strain HAW-EB3)).